Reading from the N-terminus, the 594-residue chain is RING finger protein 207 (594 aa).

The segment at 25-64 (CPLCHAQYERPCLLDCFHDFCAGCLRGRTADGRVACPLCQ) adopts an RING-type zinc-finger fold. Residues 93–145 (VEAVHCANCDLDCSKQDAETACFCNTCGQPLCARCRDETHRARMFARHDIVAL) form a B box-type; atypical zinc finger. Zn(2+) contacts are provided by Cys98, Cys101, Cys127, and His132. A disordered region spans residues 369-400 (NTLAGGSGPKVLMGPSCPSPVRKVSRSPVQKP). Residues 424 to 458 (CRHYEDSYRGLQAEVQNLKDQVQELHRDLTKHHSL) adopt a coiled-coil conformation. The interval 552–594 (FQASADDESENPQTAYDASRNGETPASLLLPGSVASAEPPFVN) is disordered. Residues 562 to 575 (NPQTAYDASRNGET) show a composition bias toward polar residues.

As to quaternary structure, interacts with the core-glycosylated, but not the fully glycosylated form of KCNH2/HERG. Interacts with DNAJA1 and HSPA8. Interacts (via the C-terminus) with HSPA1A; this interaction additively increases KCNH2 expression.

The protein resides in the cytoplasm. Functionally, plays a role in cardiac repolarization possibly by stabilizing membrane expression of the potassium channel KCNH2/HERG, or by assisting its synthesis, folding or export from the endoplasmic reticulum, in a heat shock protein-dependent manner. The chain is RING finger protein 207 (RNF207) from Oryctolagus cuniculus (Rabbit).